The following is an 830-amino-acid chain: Dimethylglycine oxidase (830 aa).

FAD contacts are provided by residues 14–15 (IV), 35–36 (DQ), 45–48 (STSH), Leu-52, and Val-174. Position 48 is a pros-8alpha-FAD histidine (His-48). Catalysis depends on residues His-225 and Tyr-259. FAD-binding positions include Tyr-259 and 360 to 363 (VWVT). Position 539 (Tyr-539) interacts with (6S)-5,6,7,8-tetrahydrofolate. Asp-552 acts as the For 5,10-methylenetetrahydrofolate synthesis activity in catalysis. (6S)-5,6,7,8-tetrahydrofolate contacts are provided by residues Thr-554, Gly-566, and 658 to 660 (ELY).

Belongs to the GcvT family. FAD serves as cofactor.

It carries out the reaction N,N-dimethylglycine + O2 + H2O = sarcosine + formaldehyde + H2O2. The catalysed reaction is N,N-dimethylglycine + (6S)-5,6,7,8-tetrahydrofolate + O2 = sarcosine + (6R)-5,10-methylene-5,6,7,8-tetrahydrofolate + H2O2. Its function is as follows. Catalyzes the oxidative demethylation of N,N-dimethylglycine to yield sarcosine, formaldehyde and hydrogen peroxide. The oxidation of dimethylglycine is coupled to the synthesis of 5,10-methylenetetrahydrofolate through an unusual substrate channeling mechanism. This channeling occurs by nonbiased diffusion of the iminium intermediate through a large solvent cavity connecting active site 1 (N-terminus) and active site 2 (C-terminus). The synthesis of 5,10-methylenetetrahydrofolate (at active site 2) prevents the accumulation of formaldehyde, formed by hydrolysis of the iminium intermediate product (at active site 1). Does not oxidize sarcosine. The polypeptide is Dimethylglycine oxidase (dmg) (Arthrobacter globiformis).